A 421-amino-acid chain; its full sequence is O-acetyl-L-homoserine sulfhydrylase 1 (421 aa).

An N6-(pyridoxal phosphate)lysine modification is found at Lys-206.

This sequence belongs to the trans-sulfuration enzymes family. Homotetramer. Requires pyridoxal 5'-phosphate as cofactor.

The catalysed reaction is O-acetyl-L-homoserine + hydrogen sulfide = L-homocysteine + acetate. It participates in amino-acid biosynthesis; L-methionine biosynthesis via de novo pathway; L-homocysteine from O-acetyl-L-homoserine: step 1/1. Its activity is regulated as follows. Inhibited by the carbonyl reagents hydroxylamine and phenylhydrazine. Also inhibited by methionine and propargylglycine. In terms of biological role, catalyzes the conversion of O-acetyl-L-homoserine (OAH) into homocysteine in the methionine biosynthesis pathway. Has weak activity with O-acetyl-L-serine, O-phospho-L-serine, L-serine, O-succinyl-L-homoserine and L-homoserine. Shows low CTT beta-lyase activity and very low CTT gamma-synthase activity. In Thermus thermophilus (strain ATCC 27634 / DSM 579 / HB8), this protein is O-acetyl-L-homoserine sulfhydrylase 1.